Consider the following 314-residue polypeptide: Aromatic prenyltransferase (314 aa).

Belongs to the aromatic prenyltransferase family.

Prenyltransferase that attaches isoprenoid moieties to carbon atoms of aromatic substrates in an enzyme-catalyzed Friedel-Crafts reaction. This Arthroderma otae (strain ATCC MYA-4605 / CBS 113480) (Microsporum canis) protein is Aromatic prenyltransferase.